A 146-amino-acid chain; its full sequence is MFHRPALQVFRQFARCQSTDSVILERSINKVQLLGRVGQDPVMRQAEGKNPVTIFSLATNELWRSGESETFHTAGDVNQKTTWHRISVFRPGLRDVAYQHVKKGARLLVEGKIDYGEYTDKNNVRRQATTIIADNIIFLSDLRDKL.

A mitochondrion-targeting transit peptide spans 1–17 (MFHRPALQVFRQFARCQ). An SSB domain is found at 28–140 (INKVQLLGRV…IIADNIIFLS (113 aa)).

In terms of assembly, homotetramer.

It is found in the mitochondrion. Its subcellular location is the mitochondrion matrix. It localises to the mitochondrion nucleoid. Binds preferentially and cooperatively to pyrimidine rich single-stranded DNA (ss-DNA). Required to maintain the copy number of mitochondrial DNA (mtDNA) and plays crucial roles during mtDNA replication that stimulate activity of the DNA polymerase at the replication fork. May also function in mtDNA repair. The chain is Single-stranded DNA-binding protein 1-A, mitochondrial (ssbp1-a) from Xenopus laevis (African clawed frog).